A 67-amino-acid chain; its full sequence is MPQGTVKWFNAEKGFGFIAPEDGSADVFVHYTEIQGSGFRTLEENQKVEFEVGQSPKGPQATGVRTI.

One can recognise a CSD domain in the interval 1–66 (MPQGTVKWFN…KGPQATGVRT (66 aa)). K47 is covalently cross-linked (Isoglutamyl lysine isopeptide (Lys-Gln) (interchain with Q-Cter in protein Pup)).

The protein resides in the cytoplasm. The sequence is that of Probable cold shock protein A (cspA) from Mycolicibacterium smegmatis (strain ATCC 700084 / mc(2)155) (Mycobacterium smegmatis).